The primary structure comprises 318 residues: Cytochrome f (318 aa).

The signal sequence occupies residues 1 to 33; it reads MKNTFSWIKKEITRSISLSLMIYIITRTSISNA. Heme-binding residues include Tyr34, Cys54, Cys57, and His58. The chain crosses the membrane as a helical span at residues 284–304; the sequence is VQGLLFFLASVILAQIFLVLK.

The protein belongs to the cytochrome f family. As to quaternary structure, the 4 large subunits of the cytochrome b6-f complex are cytochrome b6, subunit IV (17 kDa polypeptide, petD), cytochrome f and the Rieske protein, while the 4 small subunits are PetG, PetL, PetM and PetN. The complex functions as a dimer. Heme serves as cofactor.

The protein resides in the plastid. It is found in the chloroplast thylakoid membrane. In terms of biological role, component of the cytochrome b6-f complex, which mediates electron transfer between photosystem II (PSII) and photosystem I (PSI), cyclic electron flow around PSI, and state transitions. The sequence is that of Cytochrome f from Oenothera biennis (German evening primrose).